Here is a 296-residue protein sequence, read N- to C-terminus: GTP-binding protein GEM (296 aa).

Disordered regions lie at residues 1–20 (MTLNNVTMRQGTVGMQPQQQ) and 37–68 (PHQYSHRNRHSATPEDHCRRSWSSDSTDSVIS). Residues 57 to 68 (SWSSDSTDSVIS) are compositionally biased toward low complexity. Residues 82–89 (GEQGVGKS) and 191–194 (NKSD) contribute to the GTP site. Residues 266–285 (ARRFWGKIVAKNNKNMAFKL) form a calmodulin-binding region.

This sequence belongs to the small GTPase superfamily. RGK family. In terms of assembly, interacts with calmodulin in a Ca(2+)-dependent manner. Binds ROCK1. In terms of processing, phosphorylated on tyrosine residues. Most abundant in thymus, spleen, kidney, lung, and testis. Less abundant in heart, brain, liver and skeletal muscle.

It is found in the cell membrane. Its function is as follows. Could be a regulatory protein, possibly participating in receptor-mediated signal transduction at the plasma membrane. Has guanine nucleotide-binding activity but undetectable intrinsic GTPase activity. The protein is GTP-binding protein GEM (GEM) of Homo sapiens (Human).